Consider the following 936-residue polypeptide: MTDYKDTLNLPQTDFPMRANLPEREPQTLARWQTLDLYRKIRKDREGQPKFILHDGPPYANGRAHLGTAFNKTLKDIVVKSKTLSGFDAPFVPGWDCHGLPIELNVEKKLGKDKLSANAFRQACRDYAFSQIELQRDDFQRLGVLGDWQHPYLTMDFGYEADTVRALAKIVANGHLLRGQKPVHWCAACGSALAEAEVEYRDKASPAVDVGFEAVDAEAVRQRFGVKNATTRVLVPIWTTTPWTLPANEAVSVHPELHYALVKSELQNQPVYLILAKDLVDSAMQRYGVDDYEVHGNLKGDALEGMQLQHPFLDRIVPIILGEHVTTEAGTGNVHTAPAHGLEDYFVAEKYNLPINNPVDARGRFIPDTFLVGGQPVFKANEPIIVLLADSGHLLHSETIQHSYPHCWRHKTPLIFRATPQWFIGMNKNGLRERALAEIEKVTWLPAWGEARIGKMVADRPDWCISRQRLWGIPIPLFIHKKSGELHPKSPALMEKVAQLIEKESVDAWFDLDPKVLLGDDADHYEKVTDVLDVWFDSGVTHFCVLEKRRELKVPADIYLEGSDQHRGWFQSSLLTSLAIRDKAPYKSVLTYGFVVDSQGRKMSKSLGNVILPADVVKNLGADVLRLWAASMDYTVEVNVSDEILKRASDAYRRIRNTARFLLSNLYDFDPKKDKVAVDQLVALDRWAIFTTQKLQEKIITAYDRYRFPAIYQAIHNFCTVEMGSFYLDIIKDRLYTSKESGLPRRSAQTALYYIAEAFVRWIAPIISFTADEIWQFMPGDREPSVFLTQWFSDFPNAALSGEEEQRWQLLLQIRDEVNKALETYRNEGKIGSALTAEVVLYADERLNAAIATLGEELRFVLITSEASVLPFNEKSKAAFDTALPGLALEINVSEFEKCARCWQRRSSVGQIKEHADLCDRCVSNAFEDGDMRQFA.

The 'HIGH' region motif lies at 58 to 68 (PYANGRAHLGT). Position 561 (glutamate 561) interacts with L-isoleucyl-5'-AMP. A 'KMSKS' region motif is present at residues 602-606 (KMSKS). Lysine 605 contacts ATP. Cysteine 899, cysteine 902, cysteine 919, and cysteine 922 together coordinate Zn(2+).

This sequence belongs to the class-I aminoacyl-tRNA synthetase family. IleS type 1 subfamily. Monomer. Zn(2+) serves as cofactor.

It is found in the cytoplasm. It catalyses the reaction tRNA(Ile) + L-isoleucine + ATP = L-isoleucyl-tRNA(Ile) + AMP + diphosphate. Catalyzes the attachment of isoleucine to tRNA(Ile). As IleRS can inadvertently accommodate and process structurally similar amino acids such as valine, to avoid such errors it has two additional distinct tRNA(Ile)-dependent editing activities. One activity is designated as 'pretransfer' editing and involves the hydrolysis of activated Val-AMP. The other activity is designated 'posttransfer' editing and involves deacylation of mischarged Val-tRNA(Ile). The sequence is that of Isoleucine--tRNA ligase from Coxiella burnetii (strain CbuG_Q212) (Coxiella burnetii (strain Q212)).